We begin with the raw amino-acid sequence, 956 residues long: Phosphatidylinositol 4-kinase PIK1a (956 aa).

Residues methionine 1–leucine 120 enclose the PIK helical domain. A disordered region spans residues serine 545–serine 573. Residues glutamate 658 to methionine 939 form the PI3K/PI4K catalytic domain. The tract at residues lysine 664 to serine 670 is G-loop. The tract at residues glutamine 805–asparagine 813 is catalytic loop. Residues histidine 824–threonine 848 form an activation loop region.

It belongs to the PI3/PI4-kinase family. Type III PI4K subfamily.

The protein localises to the nucleus. It carries out the reaction a 1,2-diacyl-sn-glycero-3-phospho-(1D-myo-inositol) + ATP = a 1,2-diacyl-sn-glycero-3-phospho-(1D-myo-inositol 4-phosphate) + ADP + H(+). Acts on phosphatidylinositol (PI) in the first committed step in the production of the second messenger inositol 1,4,5,-trisphosphate. This chain is Phosphatidylinositol 4-kinase PIK1a (PIKA), found in Candida albicans (strain SC5314 / ATCC MYA-2876) (Yeast).